Consider the following 271-residue polypeptide: Phosphatidylinositol transfer protein beta isoform (271 aa).

K215 bears the N6-acetyllysine mark. Phosphoserine; by PKC is present on S262.

Belongs to the PtdIns transfer protein family. PI transfer class I subfamily. Constitutive phosphorylation of Ser-262 has no effect on phospholipid transfer activity but is required for Golgi targeting.

It is found in the golgi apparatus. The protein localises to the golgi apparatus membrane. It localises to the endoplasmic reticulum membrane. It carries out the reaction a 1,2-diacyl-sn-glycero-3-phosphocholine(in) = a 1,2-diacyl-sn-glycero-3-phosphocholine(out). The enzyme catalyses a 1,2-diacyl-sn-glycero-3-phospho-(1D-myo-inositol)(in) = a 1,2-diacyl-sn-glycero-3-phospho-(1D-myo-inositol)(out). The catalysed reaction is an N-(acyl)-sphingosylphosphocholine(in) = an N-(acyl)-sphingosylphosphocholine(out). In terms of biological role, catalyzes the transfer of phosphatidylinositol, phosphatidylcholine and sphingomyelin between membranes. Required for COPI-mediated retrograde transport from the Golgi to the endoplasmic reticulum; phosphatidylinositol and phosphatidylcholine transfer activity is essential for this function. This is Phosphatidylinositol transfer protein beta isoform (Pitpnb) from Mus musculus (Mouse).